A 280-amino-acid chain; its full sequence is Ribosomal RNA small subunit methyltransferase A (280 aa).

Residues histidine 15, leucine 17, glycine 42, glutamate 64, aspartate 89, and asparagine 109 each contribute to the S-adenosyl-L-methionine site.

This sequence belongs to the class I-like SAM-binding methyltransferase superfamily. rRNA adenine N(6)-methyltransferase family. RsmA subfamily.

It localises to the cytoplasm. It carries out the reaction adenosine(1518)/adenosine(1519) in 16S rRNA + 4 S-adenosyl-L-methionine = N(6)-dimethyladenosine(1518)/N(6)-dimethyladenosine(1519) in 16S rRNA + 4 S-adenosyl-L-homocysteine + 4 H(+). Its function is as follows. Specifically dimethylates two adjacent adenosines (A1518 and A1519) in the loop of a conserved hairpin near the 3'-end of 16S rRNA in the 30S particle. May play a critical role in biogenesis of 30S subunits. The protein is Ribosomal RNA small subunit methyltransferase A of Prochlorococcus marinus (strain MIT 9303).